Consider the following 331-residue polypeptide: Dof zinc finger protein DOF1.1 (331 aa).

The Dof-type zinc-finger motif lies at 77–131 (LKCPRCDSSNTKFCYYNNYNLTQPRHFCKGCRRYWTQGGALRNVPVGGGCRRNNK). Zn(2+) contacts are provided by cysteine 79, cysteine 82, cysteine 104, and cysteine 107. Disordered stretches follow at residues 121-166 (PVGG…TNHQ) and 291-331 (EEQP…NDLL). Residues 135–160 (NGNLKSSSSSSKQSSSVNAQSPSSGQ) are compositionally biased toward low complexity. Residues 305–316 (GLTSPGNQTNQY) are compositionally biased toward polar residues.

In terms of assembly, interacts with OBF4. In terms of tissue distribution, expressed in the vasculature (mainly in the phloem and associated cell files) of cotyledons, leaves, roots, flower stalks and petals. The PEAR proteins (e.g. DOF2.4, DOF5.1, DOF3.2, DOF1.1, DOF5.6 and DOF5.3) form a short-range concentration gradient that peaks at protophloem sieve elements (PSE).

The protein resides in the nucleus. Its function is as follows. Transcription factor that binds specifically to a 5'-AA[AG]G-3' consensus core sequence. Enhances the DNA binding of OBF transcription factors to OCS elements. Involved in the regulation of root development. The PEAR proteins (e.g. DOF2.4, DOF5.1, DOF3.2, DOF1.1, DOF5.6 and DOF5.3) activate gene expression that promotes radial growth of protophloem sieve elements. Element of a regulatory network controlling indole glucosinolates (IGS) biosynthesis, probably by inducing the expression of accurate genes (e.g. CYP83B1). Promotes apical dominance. In Arabidopsis thaliana (Mouse-ear cress), this protein is Dof zinc finger protein DOF1.1.